Consider the following 531-residue polypeptide: CTP synthase (531 aa).

Residues 1 to 264 form an amidoligase domain region; it reads MPKFVVVTGG…GDFLVERLRL (264 aa). Ser13 lines the CTP pocket. Residue Ser13 participates in UTP binding. Residue 14-19 participates in ATP binding; the sequence is GLGKGV. Position 54 (Tyr54) interacts with L-glutamine. An ATP-binding site is contributed by Asp71. Asp71 and Glu139 together coordinate Mg(2+). Residues 146–148, 185–190, and Lys221 contribute to the CTP site; these read DYE and KTKPLQ. Residues 185–190 and Lys221 contribute to the UTP site; that span reads KTKPLQ. A Glutamine amidotransferase type-1 domain is found at 293 to 531; sequence CGKYVELPDA…LSAAVEQSRR (239 aa). Gly351 contacts L-glutamine. Residue Cys378 is the Nucleophile; for glutamine hydrolysis of the active site. L-glutamine contacts are provided by residues 379–382, Glu402, and Arg459; that span reads FGMQ. Active-site residues include His504 and Glu506.

The protein belongs to the CTP synthase family. In terms of assembly, homotetramer.

It catalyses the reaction UTP + L-glutamine + ATP + H2O = CTP + L-glutamate + ADP + phosphate + 2 H(+). It carries out the reaction L-glutamine + H2O = L-glutamate + NH4(+). The catalysed reaction is UTP + NH4(+) + ATP = CTP + ADP + phosphate + 2 H(+). The protein operates within pyrimidine metabolism; CTP biosynthesis via de novo pathway; CTP from UDP: step 2/2. Its activity is regulated as follows. Allosterically activated by GTP, when glutamine is the substrate; GTP has no effect on the reaction when ammonia is the substrate. The allosteric effector GTP functions by stabilizing the protein conformation that binds the tetrahedral intermediate(s) formed during glutamine hydrolysis. Inhibited by the product CTP, via allosteric rather than competitive inhibition. Catalyzes the ATP-dependent amination of UTP to CTP with either L-glutamine or ammonia as the source of nitrogen. Regulates intracellular CTP levels through interactions with the four ribonucleotide triphosphates. The sequence is that of CTP synthase from Pyrobaculum calidifontis (strain DSM 21063 / JCM 11548 / VA1).